A 170-amino-acid chain; its full sequence is Large ribosomal subunit protein uL11 (170 aa).

The protein belongs to the universal ribosomal protein uL11 family. In terms of assembly, part of the ribosomal stalk of the 50S ribosomal subunit. Interacts with L10 and the large rRNA to form the base of the stalk. L10 forms an elongated spine to which L12 dimers bind in a sequential fashion forming a multimeric L10(L12)X complex.

Its function is as follows. Forms part of the ribosomal stalk which helps the ribosome interact with GTP-bound translation factors. In Saccharolobus islandicus (strain M.16.27) (Sulfolobus islandicus), this protein is Large ribosomal subunit protein uL11.